Consider the following 127-residue polypeptide: Large ribosomal subunit protein bL17 (127 aa).

Belongs to the bacterial ribosomal protein bL17 family. Part of the 50S ribosomal subunit. Contacts protein L32.

This chain is Large ribosomal subunit protein bL17, found in Leuconostoc citreum (strain KM20).